A 265-amino-acid polypeptide reads, in one-letter code: Glycine/sarcosine N-methyltransferase (265 aa).

S-adenosyl-L-methionine contacts are provided by residues Tyr-28, Trp-36, Arg-45, Ala-69, Asp-90, 116-117, and Leu-134; that span reads DW. Residues Asn-136, Arg-169, and Tyr-208 each coordinate substrate.

This sequence belongs to the class I-like SAM-binding methyltransferase superfamily. Glycine N-methyltransferase family. Monomer.

It carries out the reaction glycine + 2 S-adenosyl-L-methionine = N,N-dimethylglycine + 2 S-adenosyl-L-homocysteine + 2 H(+). It catalyses the reaction glycine + S-adenosyl-L-methionine = sarcosine + S-adenosyl-L-homocysteine + H(+). The enzyme catalyses sarcosine + S-adenosyl-L-methionine = N,N-dimethylglycine + S-adenosyl-L-homocysteine + H(+). It participates in amine and polyamine biosynthesis; betaine biosynthesis via glycine pathway; betaine from glycine: step 1/3. Its pathway is amine and polyamine biosynthesis; betaine biosynthesis via glycine pathway; betaine from glycine: step 2/3. With respect to regulation, inhibited by acetate, dimethylglycine and S-adenosyl-L-homocysteine. Its function is as follows. Catalyzes the methylation of glycine and sarcosine to sarcosine and dimethylglycine, respectively, with S-adenosylmethionine (AdoMet) acting as the methyl donor. In Aphanothece halophytica, this protein is Glycine/sarcosine N-methyltransferase.